A 150-amino-acid chain; its full sequence is Probable cyclic pyranopterin monophosphate synthase (150 aa).

Substrate contacts are provided by residues 68 to 70 (YCH) and 104 to 105 (ME). The active site involves Asp-119.

Belongs to the MoaC family. Homohexamer; trimer of dimers.

It carries out the reaction (8S)-3',8-cyclo-7,8-dihydroguanosine 5'-triphosphate = cyclic pyranopterin phosphate + diphosphate. It participates in cofactor biosynthesis; molybdopterin biosynthesis. In terms of biological role, catalyzes the conversion of (8S)-3',8-cyclo-7,8-dihydroguanosine 5'-triphosphate to cyclic pyranopterin monophosphate (cPMP). This Thermoplasma volcanium (strain ATCC 51530 / DSM 4299 / JCM 9571 / NBRC 15438 / GSS1) protein is Probable cyclic pyranopterin monophosphate synthase.